The sequence spans 265 residues: H-2 class II histocompatibility antigen, A beta chain (265 aa).

Residues 1-27 form the signal peptide; the sequence is MALQIPSLLLSAAVVVLMVLSSPGTEG. The beta-1 stretch occupies residues 28 to 122; that stretch reads GDSERHFVYQ…PETHTSLRRL (95 aa). Over 28 to 226 the chain is Extracellular; sequence GDSERHFVYQ…RAQSESAWSK (199 aa). Intrachain disulfides connect Cys-42/Cys-106 and Cys-145/Cys-201. N-linked (GlcNAc...) asparagine glycosylation occurs at Asn-46. Residues 123–216 are beta-2; it reads EQPNVVISLS…SLKSPITVEW (94 aa). Positions 125-213 constitute an Ig-like C1-type domain; the sequence is PNVVISLSRT…EHPSLKSPIT (89 aa). The connecting peptide stretch occupies residues 217 to 226; it reads RAQSESAWSK. Residues 227 to 247 form a helical membrane-spanning segment; it reads MLSGIGGCVLGVIFLGLGLFI. The Cytoplasmic segment spans residues 248 to 265; sequence RHRSQKGPRGPPPAGLLQ.

Belongs to the MHC class II family. In terms of processing, ubiquitinated in immature dendritic cells leading to down-regulation of MHC class II.

The protein resides in the membrane. This Mus musculus (Mouse) protein is H-2 class II histocompatibility antigen, A beta chain (H2-Ab1).